Here is a 171-residue protein sequence, read N- to C-terminus: 6,7-dimethyl-8-ribityllumazine synthase (171 aa).

Residues Phe-30, 64–66, and 88–90 contribute to the 5-amino-6-(D-ribitylamino)uracil site; these read ALE and AVI. 93 to 94 serves as a coordination point for (2S)-2-hydroxy-3-oxobutyl phosphate; sequence ET. Catalysis depends on His-96, which acts as the Proton donor. Residue Asn-121 participates in 5-amino-6-(D-ribitylamino)uracil binding. Residue Arg-135 participates in (2S)-2-hydroxy-3-oxobutyl phosphate binding.

Belongs to the DMRL synthase family.

The enzyme catalyses (2S)-2-hydroxy-3-oxobutyl phosphate + 5-amino-6-(D-ribitylamino)uracil = 6,7-dimethyl-8-(1-D-ribityl)lumazine + phosphate + 2 H2O + H(+). Its pathway is cofactor biosynthesis; riboflavin biosynthesis; riboflavin from 2-hydroxy-3-oxobutyl phosphate and 5-amino-6-(D-ribitylamino)uracil: step 1/2. Functionally, catalyzes the formation of 6,7-dimethyl-8-ribityllumazine by condensation of 5-amino-6-(D-ribitylamino)uracil with 3,4-dihydroxy-2-butanone 4-phosphate. This is the penultimate step in the biosynthesis of riboflavin. The chain is 6,7-dimethyl-8-ribityllumazine synthase from Polynucleobacter necessarius subsp. necessarius (strain STIR1).